The chain runs to 431 residues: Adenylosuccinate synthetase (431 aa).

Residues 13-19 (GDEGKGK) and 41-43 (GHT) contribute to the GTP site. Residue Asp-14 is the Proton acceptor of the active site. Residues Asp-14 and Gly-41 each contribute to the Mg(2+) site. Residues 14–17 (DEGK), 39–42 (NAGH), Thr-130, Arg-144, Gln-225, Thr-240, and Arg-304 each bind IMP. His-42 acts as the Proton donor in catalysis. 300–306 (ATTGRKR) contacts substrate. GTP-binding positions include Arg-306, 332 to 334 (KLD), and 415 to 417 (STG).

Belongs to the adenylosuccinate synthetase family. In terms of assembly, homodimer. Requires Mg(2+) as cofactor.

The protein localises to the cytoplasm. It carries out the reaction IMP + L-aspartate + GTP = N(6)-(1,2-dicarboxyethyl)-AMP + GDP + phosphate + 2 H(+). It functions in the pathway purine metabolism; AMP biosynthesis via de novo pathway; AMP from IMP: step 1/2. Its function is as follows. Plays an important role in the de novo pathway of purine nucleotide biosynthesis. Catalyzes the first committed step in the biosynthesis of AMP from IMP. The sequence is that of Adenylosuccinate synthetase from Shewanella denitrificans (strain OS217 / ATCC BAA-1090 / DSM 15013).